Reading from the N-terminus, the 406-residue chain is Arginine biosynthesis bifunctional protein ArgJ (406 aa).

The substrate site is built by Thr152, Lys179, Thr190, Glu277, Asn401, and Ser406. The active-site Nucleophile is the Thr190.

The protein belongs to the ArgJ family. Heterotetramer of two alpha and two beta chains.

It is found in the cytoplasm. It catalyses the reaction N(2)-acetyl-L-ornithine + L-glutamate = N-acetyl-L-glutamate + L-ornithine. The catalysed reaction is L-glutamate + acetyl-CoA = N-acetyl-L-glutamate + CoA + H(+). It participates in amino-acid biosynthesis; L-arginine biosynthesis; L-ornithine and N-acetyl-L-glutamate from L-glutamate and N(2)-acetyl-L-ornithine (cyclic): step 1/1. The protein operates within amino-acid biosynthesis; L-arginine biosynthesis; N(2)-acetyl-L-ornithine from L-glutamate: step 1/4. Functionally, catalyzes two activities which are involved in the cyclic version of arginine biosynthesis: the synthesis of N-acetylglutamate from glutamate and acetyl-CoA as the acetyl donor, and of ornithine by transacetylation between N(2)-acetylornithine and glutamate. In Neisseria gonorrhoeae, this protein is Arginine biosynthesis bifunctional protein ArgJ.